Consider the following 330-residue polypeptide: Aspartate--ammonia ligase (330 aa).

Belongs to the class-II aminoacyl-tRNA synthetase family. AsnA subfamily.

It localises to the cytoplasm. It carries out the reaction L-aspartate + NH4(+) + ATP = L-asparagine + AMP + diphosphate + H(+). It participates in amino-acid biosynthesis; L-asparagine biosynthesis; L-asparagine from L-aspartate (ammonia route): step 1/1. The protein is Aspartate--ammonia ligase of Streptococcus uberis (strain ATCC BAA-854 / 0140J).